The primary structure comprises 159 residues: 2-C-methyl-D-erythritol 2,4-cyclodiphosphate synthase (159 aa).

The a divalent metal cation site is built by Asp8 and His10. Residues 8–10 (DVH) and 34–35 (HS) contribute to the 4-CDP-2-C-methyl-D-erythritol 2-phosphate site. A divalent metal cation is bound at residue His42. Residues 56–58 (DIG), 61–65 (FPDTD), 100–106 (AQAPKML), 132–135 (TTTE), Phe139, and Arg142 each bind 4-CDP-2-C-methyl-D-erythritol 2-phosphate.

Belongs to the IspF family. In terms of assembly, homotrimer. The cofactor is a divalent metal cation.

The catalysed reaction is 4-CDP-2-C-methyl-D-erythritol 2-phosphate = 2-C-methyl-D-erythritol 2,4-cyclic diphosphate + CMP. The protein operates within isoprenoid biosynthesis; isopentenyl diphosphate biosynthesis via DXP pathway; isopentenyl diphosphate from 1-deoxy-D-xylulose 5-phosphate: step 4/6. Its function is as follows. Involved in the biosynthesis of isopentenyl diphosphate (IPP) and dimethylallyl diphosphate (DMAPP), two major building blocks of isoprenoid compounds. Catalyzes the conversion of 4-diphosphocytidyl-2-C-methyl-D-erythritol 2-phosphate (CDP-ME2P) to 2-C-methyl-D-erythritol 2,4-cyclodiphosphate (ME-CPP) with a corresponding release of cytidine 5-monophosphate (CMP). In Citrobacter koseri (strain ATCC BAA-895 / CDC 4225-83 / SGSC4696), this protein is 2-C-methyl-D-erythritol 2,4-cyclodiphosphate synthase.